Reading from the N-terminus, the 31-residue chain is Cytochrome b6-f complex subunit 6 (31 aa).

Residues 3–23 (IAIDYFLLVGFCFAFTSGLYL) traverse the membrane as a helical segment.

This sequence belongs to the PetL family. In terms of assembly, the 4 large subunits of the cytochrome b6-f complex are cytochrome b6, subunit IV (17 kDa polypeptide, PetD), cytochrome f and the Rieske protein, while the 4 small subunits are PetG, PetL, PetM and PetN. The complex functions as a dimer.

Its subcellular location is the plastid. It localises to the chloroplast thylakoid membrane. In terms of biological role, component of the cytochrome b6-f complex, which mediates electron transfer between photosystem II (PSII) and photosystem I (PSI), cyclic electron flow around PSI, and state transitions. PetL is important for photoautotrophic growth as well as for electron transfer efficiency and stability of the cytochrome b6-f complex. In Trieres chinensis (Marine centric diatom), this protein is Cytochrome b6-f complex subunit 6.